The sequence spans 293 residues: N-acetylneuraminate lyase (293 aa).

The aceneuramate site is built by S48 and S49. Y137 (proton donor) is an active-site residue. K165 (schiff-base intermediate with substrate) is an active-site residue. Positions 167, 189, 191, 192, and 208 each coordinate aceneuramate.

This sequence belongs to the DapA family. NanA subfamily. Homotetramer.

It localises to the cytoplasm. It carries out the reaction aceneuramate = aldehydo-N-acetyl-D-mannosamine + pyruvate. It participates in amino-sugar metabolism; N-acetylneuraminate degradation; D-fructose 6-phosphate from N-acetylneuraminate: step 1/5. Catalyzes the reversible aldol cleavage of N-acetylneuraminic acid (sialic acid; Neu5Ac) to form pyruvate and N-acetylmannosamine (ManNAc) via a Schiff base intermediate. This is N-acetylneuraminate lyase from Staphylococcus aureus (strain Mu3 / ATCC 700698).